The chain runs to 737 residues: Polyribonucleotide nucleotidyltransferase (737 aa).

Mg(2+) contacts are provided by aspartate 489 and aspartate 495. A KH domain is found at 556–615; the sequence is PKIDTIKIDVDKIKIVIGKGGETIDKIIAETGVKIDIDEEGNVSIYSSDQDAINRAKEII. The S1 motif domain occupies 625-693; sequence DEVYRAKVVR…EKGRIDASMK (69 aa). The disordered stretch occupies residues 691–737; it reads SMKALLPRPPKPEHDEKGEKSERPHRPRHQKDYKPKKEFTETPKDSE. Positions 700-737 are enriched in basic and acidic residues; sequence PKPEHDEKGEKSERPHRPRHQKDYKPKKEFTETPKDSE.

It belongs to the polyribonucleotide nucleotidyltransferase family. It depends on Mg(2+) as a cofactor.

Its subcellular location is the cytoplasm. The catalysed reaction is RNA(n+1) + phosphate = RNA(n) + a ribonucleoside 5'-diphosphate. Its function is as follows. Involved in mRNA degradation. Catalyzes the phosphorolysis of single-stranded polyribonucleotides processively in the 3'- to 5'-direction. The chain is Polyribonucleotide nucleotidyltransferase from Streptococcus pneumoniae serotype 2 (strain D39 / NCTC 7466).